Consider the following 799-residue polypeptide: Protein scabrous (799 aa).

The N-terminal stretch at 1 to 51 (MRDWQTFPDLQKKKVSRDHLNCPATMAGSNVLWPILLAVVLLQISVAFVSG) is a signal peptide. The tract at residues 287 to 316 (TRKDGSSASVEEESGSQEANQEQTGLETTA) is disordered. The N-linked (GlcNAc...) asparagine glycan is linked to asparagine 372. Residues 489–498 (LNKPHKRPHH) are compositionally biased toward basic residues. The interval 489 to 509 (LNKPHKRPHHQNVQAQMPQDD) is disordered. One can recognise a Fibrinogen C-terminal domain in the interval 533 to 737 (AIINKLPHDC…SSRMLVKRLP (205 aa)). A disulfide bridge links cysteine 542 with cysteine 568. Residues asparagine 587, asparagine 618, and asparagine 660 are each glycosylated (N-linked (GlcNAc...) asparagine). Cysteines 687 and 700 form a disulfide. N-linked (GlcNAc...) asparagine glycans are attached at residues asparagine 744 and asparagine 787.

In terms of processing, possesses five pairs of dibasic residues that may be the target of proteolytic processing.

Its subcellular location is the late endosome. Involved in regulation of neurogenesis. May encode a lateral inhibitor of R8 differentiation. In conjunction with Gp150, promotes Notch activation in response to Delta by regulating acquisition of insensitivity to Delta in a subset of cells. The protein is Protein scabrous (sca) of Drosophila melanogaster (Fruit fly).